Reading from the N-terminus, the 135-residue chain is ATP synthase epsilon chain (135 aa).

Belongs to the ATPase epsilon chain family. F-type ATPases have 2 components, CF(1) - the catalytic core - and CF(0) - the membrane proton channel. CF(1) has five subunits: alpha(3), beta(3), gamma(1), delta(1), epsilon(1). CF(0) has three main subunits: a, b and c.

The protein resides in the cell inner membrane. Functionally, produces ATP from ADP in the presence of a proton gradient across the membrane. In Rhodopseudomonas palustris (strain HaA2), this protein is ATP synthase epsilon chain.